The following is a 562-amino-acid chain: Alpha-amylase 2 (562 aa).

Residue Asn-236 participates in Ca(2+) binding. Asp-309 serves as the catalytic Nucleophile. Glu-338 (proton donor) is an active-site residue.

The protein belongs to the glycosyl hydrolase 13 family. Monomer. The cofactor is Ca(2+).

It is found in the cytoplasm. It carries out the reaction Endohydrolysis of (1-&gt;4)-alpha-D-glucosidic linkages in polysaccharides containing three or more (1-&gt;4)-alpha-linked D-glucose units.. The sequence is that of Alpha-amylase 2 (amyB) from Dictyoglomus thermophilum (strain ATCC 35947 / DSM 3960 / H-6-12).